The sequence spans 92 residues: Small ribosomal subunit protein uS19c (92 aa).

It belongs to the universal ribosomal protein uS19 family.

Its subcellular location is the plastid. The protein localises to the chloroplast. In terms of biological role, protein S19 forms a complex with S13 that binds strongly to the 16S ribosomal RNA. This chain is Small ribosomal subunit protein uS19c (rps19), found in Marchantia polymorpha (Common liverwort).